The chain runs to 123 residues: Large ribosomal subunit protein bL12 (123 aa).

It belongs to the bacterial ribosomal protein bL12 family. In terms of assembly, homodimer. Part of the ribosomal stalk of the 50S ribosomal subunit. Forms a multimeric L10(L12)X complex, where L10 forms an elongated spine to which 2 to 4 L12 dimers bind in a sequential fashion. Binds GTP-bound translation factors.

In terms of biological role, forms part of the ribosomal stalk which helps the ribosome interact with GTP-bound translation factors. Is thus essential for accurate translation. This chain is Large ribosomal subunit protein bL12, found in Maricaulis maris (strain MCS10) (Caulobacter maris).